A 345-amino-acid chain; its full sequence is Opioid-binding protein/cell adhesion molecule (345 aa).

A signal peptide spans 1 to 27 (MGVCGSLFQPWKCLVVVSLRLLFLVPT). Ig-like C2-type domains follow at residues 39–126 (PKAM…PKTS), 136–219 (PQIM…VKIT), and 223–310 (PPYI…ASIT). Asn44, Asn70, and Asn140 each carry an N-linked (GlcNAc...) asparagine glycan. A disulfide bridge links Cys57 with Cys115. 2 cysteine pairs are disulfide-bonded: Cys157/Cys202 and Cys244/Cys296. 3 N-linked (GlcNAc...) asparagine glycosylation sites follow: Asn285, Asn293, and Asn306. The GPI-anchor amidated asparagine moiety is linked to residue Asn322. The propeptide at 323-345 (SASRALACLWLSGTLFAHFFIKF) is removed in mature form.

It belongs to the immunoglobulin superfamily. IgLON family.

It is found in the cell membrane. Its function is as follows. Binds opioids in the presence of acidic lipids; probably involved in cell contact. This Bos taurus (Bovine) protein is Opioid-binding protein/cell adhesion molecule (OPCML).